A 350-amino-acid polypeptide reads, in one-letter code: Thymidine kinase (350 aa).

Residue 17-24 (GPFGIGKT) participates in ATP binding. Glutamate 45 (proton acceptor) is an active-site residue. Glutamine 86 serves as a coordination point for substrate. Arginine 176 provides a ligand contact to ATP. Substrate is bound at residue arginine 182.

Belongs to the herpesviridae thymidine kinase family. As to quaternary structure, homodimer.

The enzyme catalyses thymidine + ATP = dTMP + ADP + H(+). Functionally, catalyzes the transfer of the gamma-phospho group of ATP to thymidine to generate dTMP in the salvage pathway of pyrimidine synthesis. The dTMP serves as a substrate for DNA polymerase during viral DNA replication. Allows the virus to be reactivated and to grow in non-proliferative cells lacking a high concentration of phosphorylated nucleic acid precursors. The protein is Thymidine kinase of Gallus gallus (Chicken).